The primary structure comprises 1755 residues: Transposon Ty1-BL Gag-Pol polyprotein (1755 aa).

Polar residues-rich tracts occupy residues 20–31 (SVTSKEVQTTQD), 46–55 (VSTQANSQQP), and 137–168 (VGTH…TNQH). Disordered stretches follow at residues 20–84 (SVTS…QNGP), 137–173 (VGTH…RPPP), and 350–420 (QQES…IRGS). Residues 299–401 (NNGIPINNKV…NSQSRTARAH (103 aa)) form an RNA-binding region. The span at 363–372 (SPSDEKKDSR) shows a compositional bias: basic and acidic residues. Positions 373-411 (TYTNTTKPKSITRNSQKPNNSQSRTARAHNVSTFNNSPG) are enriched in polar residues. The active-site For protease activity; shared with dimeric partner is the Asp461. An integrase-type zinc finger-like region spans residues 583 to 640 (NVHTSESTRKYPYPFIHRMLAHANAQTIRYSLKNNTITYFNESDVDWSSAIDYQCPDC). In terms of domain architecture, Integrase catalytic spans 660 to 835 (NSYEPFQYLH…AGLDISTLLP (176 aa)). Asp671 and Asp736 together coordinate Mg(2+). The segment at 956-1172 (SKAVSPTDST…LGGIGDSNAY (217 aa)) is disordered. Low complexity predominate over residues 960 to 969 (SPTDSTPPST). Polar residues-rich tracts occupy residues 1005-1017 (STPQ…STDS) and 1031-1043 (MSQS…SYAS). A compositionally biased stretch (basic and acidic residues) spans 1044 to 1053 (KSKDFRHSDS). Composition is skewed to polar residues over residues 1054 to 1082 (YSDN…QTSE) and 1095 to 1106 (SIDTSSSESNSL). The short motif at 1178 to 1212 (KKRSLEDNETEIKVSRDTWNTKNMRSLEPPRSKKR) is the Bipartite nuclear localization signal element. One can recognise a Reverse transcriptase Ty1/copia-type domain in the interval 1338–1476 (NNYHITQLDI…DILGLEIKYQ (139 aa)). Asp1346, Asp1427, Asp1428, Asp1610, Glu1652, and Asp1685 together coordinate Mg(2+). Positions 1610-1752 (DASYGNQPYY…IKTFKLLTNK (143 aa)) constitute an RNase H Ty1/copia-type domain.

In terms of assembly, the capsid protein forms a homotrimer, from which the VLPs are assembled. The protease is a homodimer, whose active site consists of two apposed aspartic acid residues. Post-translationally, initially, virus-like particles (VLPs) are composed of the structural unprocessed proteins Gag and Gag-Pol, and also contain the host initiator methionine tRNA (tRNA(i)-Met) which serves as a primer for minus-strand DNA synthesis, and a dimer of genomic Ty RNA. Processing of the polyproteins occurs within the particle and proceeds by an ordered pathway, called maturation. First, the protease (PR) is released by autocatalytic cleavage of the Gag-Pol polyprotein yielding capsid protein p45 and a Pol-p154 precursor protein. This cleavage is a prerequisite for subsequent processing of Pol-p154 at the remaining sites to release the mature structural and catalytic proteins. Maturation takes place prior to the RT reaction and is required to produce transposition-competent VLPs.

The protein resides in the cytoplasm. It localises to the nucleus. The enzyme catalyses DNA(n) + a 2'-deoxyribonucleoside 5'-triphosphate = DNA(n+1) + diphosphate. It catalyses the reaction Endonucleolytic cleavage to 5'-phosphomonoester.. Its function is as follows. Capsid protein (CA) is the structural component of the virus-like particle (VLP), forming the shell that encapsulates the retrotransposons dimeric RNA genome. The particles are assembled from trimer-clustered units and there are holes in the capsid shells that allow for the diffusion of macromolecules. CA also has nucleocapsid-like chaperone activity, promoting primer tRNA(i)-Met annealing to the multipartite primer-binding site (PBS), dimerization of Ty1 RNA and initiation of reverse transcription. Functionally, the aspartyl protease (PR) mediates the proteolytic cleavages of the Gag and Gag-Pol polyproteins after assembly of the VLP. Reverse transcriptase/ribonuclease H (RT) is a multifunctional enzyme that catalyzes the conversion of the retro-elements RNA genome into dsDNA within the VLP. The enzyme displays a DNA polymerase activity that can copy either DNA or RNA templates, and a ribonuclease H (RNase H) activity that cleaves the RNA strand of RNA-DNA heteroduplexes during plus-strand synthesis and hydrolyzes RNA primers. The conversion leads to a linear dsDNA copy of the retrotransposon that includes long terminal repeats (LTRs) at both ends. In terms of biological role, integrase (IN) targets the VLP to the nucleus, where a subparticle preintegration complex (PIC) containing at least integrase and the newly synthesized dsDNA copy of the retrotransposon must transit the nuclear membrane. Once in the nucleus, integrase performs the integration of the dsDNA into the host genome. This chain is Transposon Ty1-BL Gag-Pol polyprotein (TY1B-BL), found in Saccharomyces cerevisiae (strain ATCC 204508 / S288c) (Baker's yeast).